We begin with the raw amino-acid sequence, 231 residues long: Uridylate kinase (231 aa).

6 to 9 is an ATP binding site; the sequence is KLSG. Positions 14–19 are involved in allosteric activation by GTP; the sequence is GEGGRG. Gly49 and Arg53 together coordinate ATP. Residues Asp66 and 127-134 each bind UMP; that span reads TSNPFFTT. ATP is bound by residues Thr154, Tyr160, and Asp163.

Belongs to the UMP kinase family. In terms of assembly, homohexamer.

The protein resides in the cytoplasm. The catalysed reaction is UMP + ATP = UDP + ADP. It participates in pyrimidine metabolism; CTP biosynthesis via de novo pathway; UDP from UMP (UMPK route): step 1/1. With respect to regulation, allosterically activated by GTP. Inhibited by UTP. Catalyzes the reversible phosphorylation of UMP to UDP. The chain is Uridylate kinase from Thermotoga petrophila (strain ATCC BAA-488 / DSM 13995 / JCM 10881 / RKU-1).